A 211-amino-acid chain; its full sequence is MQSAMFLAVQHDCVPMDKSAGNGPKVEEKREKMKRTLLKDWKTRLSYFLQNSSTPGKPKTGKKSKQQTFIKPSPEEALLWAEAFDELLASKYGLAAFRAFLKSEFCEENIEFWLACEDFKKTKSPQKLSSKARKIYTDFIEKEAPKEINIDFQTKTLIAQNIQEATSGCFTTAQKRVYSLMENNSYPRFLESEFYQDLCKKPQITTEPHAT.

The necessary for membrane association stretch occupies residues 32–66 (KMKRTLLKDWKTRLSYFLQNSSTPGKPKTGKKSKQ). The tract at residues 79 to 116 (LWAEAFDELLASKYGLAAFRAFLKSEFCEENIEFWLAC) is necessary to inhibit protein synthesis. Residues 83–199 (AFDELLASKY…LESEFYQDLC (117 aa)) enclose the RGS domain.

Interacts with GNAQ. Does not interact with GNAI1 and GNAI3. Interacts with EIF2B5. Interacts with PRKG1 (isoform alpha). In terms of processing, phosphorylated by protein kinase C. Phosphorylation by PRKG1 leads to activation of RGS2 activity.

It is found in the cell membrane. Its subcellular location is the cytoplasm. The protein localises to the nucleus. It localises to the nucleolus. Functionally, regulates G protein-coupled receptor signaling cascades. Inhibits signal transduction by increasing the GTPase activity of G protein alpha subunits, thereby driving them into their inactive GDP-bound form. It is involved in the negative regulation of the angiotensin-activated signaling pathway. Plays a role in the regulation of blood pressure in response to signaling via G protein-coupled receptors and GNAQ. Plays a role in regulating the constriction and relaxation of vascular smooth muscle. Binds EIF2B5 and blocks its activity, thereby inhibiting the translation of mRNA into protein. The protein is Regulator of G-protein signaling 2 (Rgs2) of Rattus norvegicus (Rat).